A 199-amino-acid polypeptide reads, in one-letter code: NAD(P)H dehydrogenase (quinone) (199 aa).

A Flavodoxin-like domain is found at 4–190 (VLVLYYSSYG…AMARFQGGHV (187 aa)). FMN is bound by residues 10–15 (SSYGHI) and 78–80 (TRF). Tyrosine 12 is a binding site for NAD(+). Tryptophan 98 serves as a coordination point for substrate. FMN contacts are provided by residues 113-119 (STATQHG) and histidine 134.

This sequence belongs to the WrbA family. FMN is required as a cofactor.

It carries out the reaction a quinone + NADH + H(+) = a quinol + NAD(+). The catalysed reaction is a quinone + NADPH + H(+) = a quinol + NADP(+). This is NAD(P)H dehydrogenase (quinone) from Azoarcus sp. (strain BH72).